The sequence spans 944 residues: Isoleucine--tRNA ligase (944 aa).

The 'HIGH' region signature appears at 58–68; the sequence is PYANGDIHIGH. Residue glutamate 568 participates in L-isoleucyl-5'-AMP binding. The 'KMSKS' region motif lies at 609–613; the sequence is KMSKS. ATP is bound at residue lysine 612. The Zn(2+) site is built by cysteine 907, cysteine 910, cysteine 927, and cysteine 930.

This sequence belongs to the class-I aminoacyl-tRNA synthetase family. IleS type 1 subfamily. As to quaternary structure, monomer. Zn(2+) is required as a cofactor.

Its subcellular location is the cytoplasm. The enzyme catalyses tRNA(Ile) + L-isoleucine + ATP = L-isoleucyl-tRNA(Ile) + AMP + diphosphate. In terms of biological role, catalyzes the attachment of isoleucine to tRNA(Ile). As IleRS can inadvertently accommodate and process structurally similar amino acids such as valine, to avoid such errors it has two additional distinct tRNA(Ile)-dependent editing activities. One activity is designated as 'pretransfer' editing and involves the hydrolysis of activated Val-AMP. The other activity is designated 'posttransfer' editing and involves deacylation of mischarged Val-tRNA(Ile). The chain is Isoleucine--tRNA ligase from Psychromonas ingrahamii (strain DSM 17664 / CCUG 51855 / 37).